The sequence spans 387 residues: 3-ketoacyl-CoA thiolase (387 aa).

The active-site Acyl-thioester intermediate is C91. Active-site proton acceptor residues include H343 and C373.

This sequence belongs to the thiolase-like superfamily. Thiolase family. In terms of assembly, heterotetramer of two alpha chains (FadB) and two beta chains (FadA).

The protein localises to the cytoplasm. It carries out the reaction an acyl-CoA + acetyl-CoA = a 3-oxoacyl-CoA + CoA. Its pathway is lipid metabolism; fatty acid beta-oxidation. In terms of biological role, catalyzes the final step of fatty acid oxidation in which acetyl-CoA is released and the CoA ester of a fatty acid two carbons shorter is formed. This Shewanella loihica (strain ATCC BAA-1088 / PV-4) protein is 3-ketoacyl-CoA thiolase.